We begin with the raw amino-acid sequence, 298 residues long: Acetaldehyde dehydrogenase (298 aa).

An NAD(+)-binding site is contributed by 6-9 (SGNI). C121 serves as the catalytic Acyl-thioester intermediate. NAD(+) is bound by residues 152–160 (SAGPGTRAN) and N271.

It belongs to the acetaldehyde dehydrogenase family.

It carries out the reaction acetaldehyde + NAD(+) + CoA = acetyl-CoA + NADH + H(+). In Mycobacterium avium (strain 104), this protein is Acetaldehyde dehydrogenase.